Consider the following 246-residue polypeptide: NH(3)-dependent NAD(+) synthetase (246 aa).

29 to 36 (GLSGGIDS) contacts ATP. Residue Asp-35 coordinates Mg(2+). A deamido-NAD(+)-binding site is contributed by Arg-110. Thr-130 contributes to the ATP binding site. Glu-135 serves as a coordination point for Mg(2+). Lys-159 and Ser-181 together coordinate ATP.

The protein belongs to the NAD synthetase family. In terms of assembly, homodimer.

It catalyses the reaction deamido-NAD(+) + NH4(+) + ATP = AMP + diphosphate + NAD(+) + H(+). Its pathway is cofactor biosynthesis; NAD(+) biosynthesis; NAD(+) from deamido-NAD(+) (ammonia route): step 1/1. In terms of biological role, catalyzes the ATP-dependent amidation of deamido-NAD to form NAD. Uses ammonia as a nitrogen source. This chain is NH(3)-dependent NAD(+) synthetase, found in Campylobacter jejuni subsp. jejuni serotype O:2 (strain ATCC 700819 / NCTC 11168).